The sequence spans 2157 residues: MEDPYRVYLFGDQTGDFEVGLRRLLQAKNHSLLSSFLQRSYHAVRQEISHLPPSERSTFPRFTSIGDLLARHCESPGNPAIESVLTCIYQLGCFINYYGDLGHTFPSHSQSQLVGLCTGLLSCAAVSCASNIGELLKPAVEVVVVALRLGLCVYRVRKLFGQDQAAPLSWSALVSGLSESEGTSLIDKFTRRNVIPPSSRPYISAVCANTLTISGPPVVLNQFLDTFISGKNKAVMVPIHGPFHASHLYEKRDVEWILKSCNVETIRNHKPRIPVLSSNTGELIVVENMEGFLKIALEEILLRQMSWDKVTDSCISILKSVGDNKPKKLLPISSTATQSLFNSLKKSNLVNIEVDGGISDFAAETQLVNQTGRAELSKIAIIGMSGRFPEADSPQDFWNLLYKGLDVHRKVPEDRWDADAHVDLTGTATNTSKVPYGCWIREPGLFDPRFFNMSPREALQADPAQRLALLTAYEALEGAGFVPDSTPSTQRDRVGIFYGMTSDDYREVNSGQDIDTYFIPGGNRAFTPGRINYYFKFSGPSVSVDTACSSSLAAIHLACNSIWRNDCDTAITGGVNILTNPDNHAGLDRGHFLSRTGNCNTFDDGADGYCRADGVGTVVLKRLEDALADNDPILGVINGAYTNHSAEAVSITRPHVGAQAFIFKKLLNEANVDPKNISYIEMHGTGTQAGDAVEMQSVLDVFAPDHRRGPGQSLHLGSAKSNIGHGESASGVTSLVKVLLMMKENMIPPHCGIKTKINHNFPTDLAQRNVHIALQPTAWNRPSFGKRQIFLNNFSAAGGNTALLLEDGPVSDPEGEDKRRTHVITLSARSQTALQNNIDALCQYISEQEKTFGVKDSNALPSLAYTTTARRIHHPFRVTAIGSSFQEMRDSLIASSRKEFVAVPAKTPGIGFLFTGQGAQYAAMGKQLYEDCSHFRSAIEHLDCISQGQDLPSILPLVDGSLPLSELSPVVVQLGTTCVQMALSSFWASLGITPSFVLGHSLGDFAAMNAAGVLSTSDTIYACGRRAQLLTERCQPGTHAMLAIKAPLVEVKQLLNEKVHDMACINSPSETVISGPKSSIDELSRACSEKGLKSTILTVPYAFHSAQVEPILEDLEKALQGITFNKPSVPFVSALLGEVITEAGSNILNAEYLVRHCRETVNFLSAFEAVRNAKLGGDQTLWLEVGPHTVCSGMVKATLGPQTTTMASLRRDEDTWKVLSNSLSSLYLAGVDINWKQYHQDFSSSHRVLPLPTYKWDLKNYWIPYRNNFCLTKGSSMSAASASLQPTFLTTSAQRVVESRDDGLTATVVVHNDIADPDLNRVIQGHKVNGAALCPSSLYADSAQTLAEYLIEKYKPELKGSGLDVCNVTVPKPLIAKTGKEQFRISATANWVDKHVSVQVFSVTAEGKKLIDHAHCEVKLFDCMAADLEWKRGSYLVKRSIELLENSAVKGDAHRLRRGMVYKLFSALVDYDENYQSIREVILDSEHHEATALVKFQAPQANFHRNPYWIDSFGHLSGFIMNASDGTDSKSQVFVNHGWDSMRCLKKFSADVTYRTYVRMQPWRDSIWAGNVYIFEGDDIIAVFGGVKFQALSRKILDIALPPAGLSKAQTSPIQSSAPQKPIETAKPTSRPAPPVTMKSFVKKSAGPSVVVRALNILASEVGLSESDMSDDLVFADYGVDSLLSLTVTGKYREELNLDMDSSVFIEHPTVGDFKRFVTQLSPSVASDSSSTDRESEYSFNGDSCSGLSSPASPGTVSPPNEKVIQIHENGTMKEIRAIIADEIGVSADEIKSDENLNELGMDSLLSLTVLGKIRESLDMDLPGEFFIENQTLDQIETALDLKPKAVPTAVPQSQPITLPQSQSTKQLSTRPTSSSDNHPPATSILLQGNPRTASKTLFLFPDGSGSATSYATIPGVSPNVAVYGLNCPYMKAPEKLTCSLDSLTTPYLAEIRRRQPTGPYNLGGWSAGGICAYDAARKLVLQQGEIVETLLLLDTPFPIGLEKLPPRLYSFFNSIGLFGEGKAAPPAWLLPHFLAFIDSLDAYKAVPLPFNEQEWKGKLPKTYLVWAKDGVCPKPGDPWPEPAEDGSKDPREMVWLLSNRTDLGPNGWDTLVGKENIGGITVIHDANHFTMTKGEKAKELATFMKNALGVCERRLV.

The tract at residues 8-244 (YLFGDQTGDF…VMVPIHGPFH (237 aa)) is N-terminal acylcarrier protein transacylase domain (SAT). Residues 376-807 (LSKIAIIGMS…GGNTALLLED (432 aa)) enclose the Ketosynthase family 3 (KS3) domain. Residues cysteine 548, histidine 683, and histidine 725 each act as for beta-ketoacyl synthase activity in the active site. Residues 912–1232 (FLFTGQGAQY…LSSLYLAGVD (321 aa)) are malonyl-CoA:ACP transacylase (MAT) domain. Residue serine 1001 is the For acyl/malonyl transferase activity of the active site. The segment at 1290-1603 (TTSAQRVVES…RKILDIALPP (314 aa)) is product template (PT) domain. Positions 1294–1425 (QRVVESRDDG…CEVKLFDCMA (132 aa)) are N-terminal hotdog fold. The 305-residue stretch at 1294 to 1598 (QRVVESRDDG…FQALSRKILD (305 aa)) folds into the PKS/mFAS DH domain. Residue histidine 1326 is the Proton acceptor; for dehydratase activity of the active site. Positions 1453–1598 (AHRLRRGMVY…FQALSRKILD (146 aa)) are C-terminal hotdog fold. Catalysis depends on aspartate 1511, which acts as the Proton donor; for dehydratase activity. A disordered region spans residues 1607-1638 (SKAQTSPIQSSAPQKPIETAKPTSRPAPPVTM). Over residues 1608-1619 (KAQTSPIQSSAP) the composition is skewed to polar residues. One can recognise a Carrier 1 domain in the interval 1645–1722 (SAGPSVVVRA…DFKRFVTQLS (78 aa)). Residue serine 1682 is modified to O-(pantetheine 4'-phosphoryl)serine. Residues 1725-1760 (VASDSSSTDRESEYSFNGDSCSGLSSPASPGTVSPP) are disordered. The segment covering 1741 to 1759 (NGDSCSGLSSPASPGTVSP) has biased composition (polar residues). A Carrier 2 domain is found at 1767–1844 (IHENGTMKEI…QIETALDLKP (78 aa)). Serine 1804 carries the O-(pantetheine 4'-phosphoryl)serine modification. The segment at 1847–1888 (VPTAVPQSQPITLPQSQSTKQLSTRPTSSSDNHPPATSILLQ) is disordered. A compositionally biased stretch (polar residues) spans 1851–1878 (VPQSQPITLPQSQSTKQLSTRPTSSSDN). The claisen cyclase domain stretch occupies residues 1877-2149 (DNHPPATSIL…ELATFMKNAL (273 aa)). The active-site For thioesterase activity is the serine 1967.

It depends on pantetheine 4'-phosphate as a cofactor.

The catalysed reaction is 6 malonyl-CoA + acetyl-CoA + 6 H(+) = naphtopyrone YWA1 + 6 CO2 + 7 CoA + H2O. The protein operates within polyketide biosynthesis; heptaketide naphthopyrone YWA1 biosynthesis. Non-reducing polyketide synthase that condenses acetate units to form a heptaketide naphthopyrene YWA1, a yellow pigment found in mature asexual spores (conidia), via a polyketomethylene intermediate step. In Emericella nidulans (strain FGSC A4 / ATCC 38163 / CBS 112.46 / NRRL 194 / M139) (Aspergillus nidulans), this protein is Conidial yellow pigment biosynthesis polyketide synthase.